We begin with the raw amino-acid sequence, 157 residues long: Crossover junction endodeoxyribonuclease RuvC (157 aa).

Catalysis depends on residues D7, E67, and D140. Mg(2+) is bound by residues D7, E67, and D140.

It belongs to the RuvC family. As to quaternary structure, homodimer which binds Holliday junction (HJ) DNA. The HJ becomes 2-fold symmetrical on binding to RuvC with unstacked arms; it has a different conformation from HJ DNA in complex with RuvA. In the full resolvosome a probable DNA-RuvA(4)-RuvB(12)-RuvC(2) complex forms which resolves the HJ. The cofactor is Mg(2+).

It is found in the cytoplasm. The catalysed reaction is Endonucleolytic cleavage at a junction such as a reciprocal single-stranded crossover between two homologous DNA duplexes (Holliday junction).. The RuvA-RuvB-RuvC complex processes Holliday junction (HJ) DNA during genetic recombination and DNA repair. Endonuclease that resolves HJ intermediates. Cleaves cruciform DNA by making single-stranded nicks across the HJ at symmetrical positions within the homologous arms, yielding a 5'-phosphate and a 3'-hydroxyl group; requires a central core of homology in the junction. The consensus cleavage sequence is 5'-(A/T)TT(C/G)-3'. Cleavage occurs on the 3'-side of the TT dinucleotide at the point of strand exchange. HJ branch migration catalyzed by RuvA-RuvB allows RuvC to scan DNA until it finds its consensus sequence, where it cleaves and resolves the cruciform DNA. The polypeptide is Crossover junction endodeoxyribonuclease RuvC (Rickettsia rickettsii (strain Iowa)).